Reading from the N-terminus, the 283-residue chain is Galactooligosaccharides transport system permease protein GanQ (283 aa).

6 consecutive transmembrane segments (helical) span residues 13-33, 82-102, 115-135, 137-157, 188-208, and 248-268; these read LLFSYLLLAFMAVIIVYPLLW, ISLFTMAGSLLCVTFTAYAFS, LFLLLQMIPQFSALIALFVLA, ILGMINSHWLLILLYIGGLIP, IFFQIILPLSKPMAAVVAMNG, and TTFAAGALLISIPVAVIFIML. The 193-residue stretch at 76–268 folds into the ABC transmembrane type-1 domain; that stretch reads YVNSMKISLF…IPVAVIFIML (193 aa).

The protein belongs to the binding-protein-dependent transport system permease family. As to quaternary structure, the complex is composed of two ATP-binding proteins (MsmX), two transmembrane proteins (GanP and GanQ) and a solute-binding protein (GanS).

The protein resides in the cell membrane. Its function is as follows. Involved in galactan degradation. Part of the ABC transporter complex GanPQS involved in the uptake of galactooligosaccharides. Responsible for the translocation of the substrate across the membrane. This chain is Galactooligosaccharides transport system permease protein GanQ (ganQ), found in Bacillus subtilis (strain 168).